We begin with the raw amino-acid sequence, 73 residues long: Protein RALF-like 10 (73 aa).

The signal sequence occupies residues 1-17 (MKALVICLLVIFAAVIA). 2 cysteine pairs are disulfide-bonded: cysteine 35–cysteine 44 and cysteine 64–cysteine 70.

This sequence belongs to the plant rapid alkalinization factor (RALF) family. Expressed in flowers.

It is found in the secreted. Its function is as follows. Cell signaling peptide that may regulate plant stress, growth, and development. Mediates a rapid alkalinization of extracellular space by mediating a transient increase in the cytoplasmic Ca(2+) concentration leading to a calcium-dependent signaling events through a cell surface receptor and a concomitant activation of some intracellular mitogen-activated protein kinases. In Arabidopsis thaliana (Mouse-ear cress), this protein is Protein RALF-like 10 (RALFL10).